A 345-amino-acid chain; its full sequence is MAMAVAQKFNHLLSSLWHVGQKPPQPEPVFTVDRAQVPPLFWKPYIYAGYRPLHQNWCFYFRTLFQRHNEAVNVWTHLLAALALLLRLIGLAASVDFREDPHALPLFFIVLASFTYLSFSAVAHLLQAKSEFWHYSFFFLDYVGVAVYQFGSALAHFYYAIEPSWHDKVQAIFLPTAAFLAWLSCAGSCYNKYSQKPGLLGRIFQEAPSALAYVLDISPVLHRIIVSPLPAEEDPALLYHKCQVVFFLLAAAFFSTVMPESWFPGSCHIFGQGHQVFHVFLVLCTLAQLEAVTLDYQARRGIYEPLHARWPHNFSGLFLLTVASSSLTALLLSQLVRRKLHQKTK.

Residues 1-74 (MAMAVAQKFN…FQRHNEAVNV (74 aa)) lie on the Cytoplasmic side of the membrane. The chain crosses the membrane as a helical span at residues 75–95 (WTHLLAALALLLRLIGLAASV). Over 96–102 (DFREDPH) the chain is Extracellular. Residues 103-123 (ALPLFFIVLASFTYLSFSAVA) traverse the membrane as a helical segment. Residues 124-136 (HLLQAKSEFWHYS) are Cytoplasmic-facing. A helical membrane pass occupies residues 137–157 (FFFLDYVGVAVYQFGSALAHF). The Extracellular segment spans residues 158 to 168 (YYAIEPSWHDK). A helical transmembrane segment spans residues 169–189 (VQAIFLPTAAFLAWLSCAGSC). At 190-243 (YNKYSQKPGLLGRIFQEAPSALAYVLDISPVLHRIIVSPLPAEEDPALLYHKCQ) the chain is on the cytoplasmic side. A helical transmembrane segment spans residues 244–264 (VVFFLLAAAFFSTVMPESWFP). The Extracellular segment spans residues 265–268 (GSCH). Residues 269 to 289 (IFGQGHQVFHVFLVLCTLAQL) traverse the membrane as a helical segment. The Cytoplasmic segment spans residues 290–315 (EAVTLDYQARRGIYEPLHARWPHNFS). The helical transmembrane segment at 316–336 (GLFLLTVASSSLTALLLSQLV) threads the bilayer. Residues 337-345 (RRKLHQKTK) are Extracellular-facing.

This sequence belongs to the ADIPOR family. Detected in most adult tissues. Higher expression found in white fat and liver than brown fat and skeletal muscle.

Its subcellular location is the cell membrane. Functionally, plasma membrane progesterone (P4) receptor coupled to G proteins. Seems to act through a G(i) mediated pathway. May be involved in oocyte maturation. Involved in neurosteroid inhibition of apoptosis. Also binds dehydroepiandrosterone (DHEA), pregnanolone, pregnenolone and allopregnanolone. This Mus musculus (Mouse) protein is Membrane progestin receptor alpha.